Consider the following 403-residue polypeptide: Tyrosine--tRNA ligase (403 aa).

The short motif at 42–51 (PTAPDLHLGH) is the 'HIGH' region element. The 'KMSKS' region signature appears at 226-230 (KMSKS). Residue lysine 229 participates in ATP binding. The region spanning 339–400 (LRLAGLLTAA…GKRNFARVLL (62 aa)) is the S4 RNA-binding domain.

It belongs to the class-I aminoacyl-tRNA synthetase family. TyrS type 2 subfamily. Homodimer.

The protein resides in the cytoplasm. It catalyses the reaction tRNA(Tyr) + L-tyrosine + ATP = L-tyrosyl-tRNA(Tyr) + AMP + diphosphate + H(+). In terms of biological role, catalyzes the attachment of tyrosine to tRNA(Tyr) in a two-step reaction: tyrosine is first activated by ATP to form Tyr-AMP and then transferred to the acceptor end of tRNA(Tyr). The protein is Tyrosine--tRNA ligase of Xanthomonas euvesicatoria pv. vesicatoria (strain 85-10) (Xanthomonas campestris pv. vesicatoria).